A 736-amino-acid chain; its full sequence is Copper-exporting P-type ATPase (736 aa).

The segment covering 1–17 (MKHDHHQGHTHSGKGHA) has biased composition (basic residues). The tract at residues 1-32 (MKHDHHQGHTHSGKGHACHHEHNSPKTQQASS) is disordered. A run of 6 helical transmembrane segments spans residues 85–105 (FWIA…GHGL), 114–134 (SSWI…WPFF), 149–169 (FTLI…AVLW), 183–203 (VVAV…LGQV), 341–361 (GWFV…WALL), and 369–389 (YGLI…LGLA). Catalysis depends on Asp-426, which acts as the 4-aspartylphosphate intermediate. Asp-426, Thr-428, and Asp-624 together coordinate Mg(2+). A run of 2 helical transmembrane segments spans residues 682–702 (LFFA…VLYP) and 706–726 (LLLS…SVII).

This sequence belongs to the cation transport ATPase (P-type) (TC 3.A.3) family. Type IB subfamily. Mg(2+) serves as cofactor.

The protein localises to the cell inner membrane. The catalysed reaction is Cu(+)(in) + ATP + H2O = Cu(+)(out) + ADP + phosphate + H(+). Activated by phospholipids, Mg(2+) and Cu(+). Its function is as follows. Couples the hydrolysis of ATP with the export of copper. The chain is Copper-exporting P-type ATPase from Legionella pneumophila subsp. pneumophila (strain Philadelphia 1 / ATCC 33152 / DSM 7513).